Consider the following 138-residue polypeptide: NADH-quinone oxidoreductase subunit A 1 (138 aa).

A run of 3 helical transmembrane segments spans residues 19–39 (FLPL…LLLA), 74–94 (FYLI…IFAW), and 103–123 (LAGL…LVWL).

Belongs to the complex I subunit 3 family. As to quaternary structure, NDH-1 is composed of 14 different subunits. Subunits NuoA, H, J, K, L, M, N constitute the membrane sector of the complex.

It is found in the cell inner membrane. The enzyme catalyses a quinone + NADH + 5 H(+)(in) = a quinol + NAD(+) + 4 H(+)(out). In terms of biological role, NDH-1 shuttles electrons from NADH, via FMN and iron-sulfur (Fe-S) centers, to quinones in the respiratory chain. The immediate electron acceptor for the enzyme in this species is believed to be ubiquinone. Couples the redox reaction to proton translocation (for every two electrons transferred, four hydrogen ions are translocated across the cytoplasmic membrane), and thus conserves the redox energy in a proton gradient. This chain is NADH-quinone oxidoreductase subunit A 1, found in Geobacter metallireducens (strain ATCC 53774 / DSM 7210 / GS-15).